The following is a 696-amino-acid chain: Glycine--tRNA ligase beta subunit (696 aa).

The protein belongs to the class-II aminoacyl-tRNA synthetase family. Tetramer of two alpha and two beta subunits.

The protein localises to the cytoplasm. It carries out the reaction tRNA(Gly) + glycine + ATP = glycyl-tRNA(Gly) + AMP + diphosphate. The chain is Glycine--tRNA ligase beta subunit from Aromatoleum aromaticum (strain DSM 19018 / LMG 30748 / EbN1) (Azoarcus sp. (strain EbN1)).